A 203-amino-acid polypeptide reads, in one-letter code: Dual specificity phosphatase 29 (203 aa).

One can recognise a Tyrosine-protein phosphatase domain in the interval histidine 47–glutamate 193. Position 137 to 144 (histidine 137 to arginine 144) interacts with substrate. Cysteine 138 serves as the catalytic Phosphocysteine intermediate.

This sequence belongs to the protein-tyrosine phosphatase family. Non-receptor class dual specificity subfamily.

The protein localises to the cytoplasm. It localises to the nucleus. The enzyme catalyses O-phospho-L-tyrosyl-[protein] + H2O = L-tyrosyl-[protein] + phosphate. It catalyses the reaction O-phospho-L-seryl-[protein] + H2O = L-seryl-[protein] + phosphate. The catalysed reaction is O-phospho-L-threonyl-[protein] + H2O = L-threonyl-[protein] + phosphate. Functionally, dual specificity phosphatase able to dephosphorylate phosphotyrosine, phosphoserine and phosphothreonine residues within the same substrate, with a preference for phosphotyrosine as a substrate. Involved in the modulation of AMPK and MAPK1/2 signaling pathways. This is Dual specificity phosphatase 29 (dusp29) from Oryzias latipes (Japanese rice fish).